The sequence spans 404 residues: Probable tRNA sulfurtransferase (404 aa).

The THUMP domain occupies 61 to 166 (EAVSERLKDV…SGYSYIMCDE (106 aa)). Residues 184–185 (LL), 209–210 (HF), Arg266, Gly288, and Gln297 each bind ATP.

Belongs to the ThiI family.

It is found in the cytoplasm. The enzyme catalyses [ThiI sulfur-carrier protein]-S-sulfanyl-L-cysteine + a uridine in tRNA + 2 reduced [2Fe-2S]-[ferredoxin] + ATP + H(+) = [ThiI sulfur-carrier protein]-L-cysteine + a 4-thiouridine in tRNA + 2 oxidized [2Fe-2S]-[ferredoxin] + AMP + diphosphate. It carries out the reaction [ThiS sulfur-carrier protein]-C-terminal Gly-Gly-AMP + S-sulfanyl-L-cysteinyl-[cysteine desulfurase] + AH2 = [ThiS sulfur-carrier protein]-C-terminal-Gly-aminoethanethioate + L-cysteinyl-[cysteine desulfurase] + A + AMP + 2 H(+). The protein operates within cofactor biosynthesis; thiamine diphosphate biosynthesis. Functionally, catalyzes the ATP-dependent transfer of a sulfur to tRNA to produce 4-thiouridine in position 8 of tRNAs, which functions as a near-UV photosensor. Also catalyzes the transfer of sulfur to the sulfur carrier protein ThiS, forming ThiS-thiocarboxylate. This is a step in the synthesis of thiazole, in the thiamine biosynthesis pathway. The sulfur is donated as persulfide by IscS. This Bacillus cereus (strain AH187) protein is Probable tRNA sulfurtransferase.